The chain runs to 309 residues: tRNA dimethylallyltransferase 1 (309 aa).

14 to 21 (GPTASGKS) serves as a coordination point for ATP. 16 to 21 (TASGKS) is a substrate binding site. Positions 39-42 (DSMQ) are interaction with substrate tRNA.

The protein belongs to the IPP transferase family. As to quaternary structure, monomer. Mg(2+) is required as a cofactor.

It catalyses the reaction adenosine(37) in tRNA + dimethylallyl diphosphate = N(6)-dimethylallyladenosine(37) in tRNA + diphosphate. Catalyzes the transfer of a dimethylallyl group onto the adenine at position 37 in tRNAs that read codons beginning with uridine, leading to the formation of N6-(dimethylallyl)adenosine (i(6)A). This chain is tRNA dimethylallyltransferase 1, found in Pelobacter propionicus (strain DSM 2379 / NBRC 103807 / OttBd1).